Reading from the N-terminus, the 252-residue chain is Tumor necrosis factor ligand superfamily member 15 (252 aa).

At 1 to 39 (MAEELGLGFGEGVPVEVLPEGCRHRPEARAGLAARSKAC) the chain is on the cytoplasmic side. A helical; Signal-anchor for type II membrane protein transmembrane segment spans residues 40–60 (LALTCCLLSFPILAGLSTLLM). The Extracellular portion of the chain corresponds to 61–252 (AGQLRVPGKD…DKTFFGAFLL (192 aa)). Positions 96–252 (PRAHLTIKKQ…DKTFFGAFLL (157 aa)) constitute a THD domain. Asparagine 137 carries an N-linked (GlcNAc...) asparagine glycan. An intrachain disulfide couples cysteine 163 to cysteine 203. Asparagine 230 is a glycosylation site (N-linked (GlcNAc...) asparagine).

This sequence belongs to the tumor necrosis factor family. As to quaternary structure, homotrimer.

It localises to the membrane. In terms of biological role, receptor for TNFRSF25 and TNFRSF6B. Mediates activation of NF-kappa-B. Inhibits vascular endothelial growth and angiogenesis (in vitro). Promotes activation of caspases and apoptosis. Promotes splenocyte alloactivation. The polypeptide is Tumor necrosis factor ligand superfamily member 15 (Tnfsf15) (Mus musculus (Mouse)).